A 3414-amino-acid polypeptide reads, in one-letter code: Hemocyanin 1 (3414 aa).

A signal peptide spans 1–16 (MLSVRLLIVVLALANA). An a divalent metal cation-binding site is contributed by Glu17. A functional unit a (wall) region spans residues 17–437 (ENLVRKSVEH…PPVKHHQSAN (421 aa)). Position 58 (His58) interacts with Cu cation. Cys64 and Cys73 are oxidised to a cystine. A cross-link (2'-(S-cysteinyl)-histidine (Cys-His)) is located at residues 74–76 (CIH). His76, His85, His195, His199, and His226 together coordinate Cu cation. Residues Cys185 and Cys252 are joined by a disulfide bond. Residues 287-290 (CELH) constitute a cross-link (2'-(S-cysteinyl)-histidine (Cys-His)). A disulfide bridge connects residues Cys339 and Cys351. The N-linked (GlcNAc...) asparagine glycan is linked to Asn403. The functional unit b (wall) stretch occupies residues 438-851 (LLVRKNINDL…RVKFDKVPRS (414 aa)). His478 is a binding site for Cu cation. An intrachain disulfide couples Cys484 to Cys495. The segment at residues 496 to 498 (CVH) is a cross-link (2'-(S-cysteinyl)-histidine (Cys-His)). The Cu cation site is built by His498 and His507. Asn545 carries an N-linked (GlcNAc...) asparagine glycan. An intrachain disulfide couples Cys608 to Cys674. Cu cation contacts are provided by His618, His622, and His649. One copy of the WD 1 repeat lies at 628–669 (SEHFSMSSLHYTAFDPLFYFHHSNVDRLWAVWQALQMRRHKP). Glu737 contributes to the a divalent metal cation binding site. The functional unit c (wall) stretch occupies residues 852-1271 (RLIRKNVDRL…EVYQAEVTSA (420 aa)). His892 lines the Cu cation pocket. Cysteines 898 and 909 form a disulfide. Positions 910-912 (CVH) form a cross-link, 2'-(S-cysteinyl)-histidine (Cys-His). The Cu cation site is built by His912, His921, His1031, His1035, and His1062. 2 cysteine pairs are disulfide-bonded: Cys1021-Cys1088 and Cys1178-Cys1184. One copy of the WD 2 repeat lies at 1041 to 1082 (AQPYGMASLRYTAFDPLFYLHHSNTDRIWAIWQALQKYRGKP). The interval 1272–1680 (NRIRKNIENL…AHTDDGHTEP (409 aa)) is functional unit d (wall). His1309 is a Cu cation binding site. Cys1315 and Cys1324 are disulfide-bonded. Positions 1325-1327 (CVH) form a cross-link, 2'-(S-cysteinyl)-histidine (Cys-His). Residues His1327, His1336, His1440, His1444, and His1471 each contribute to the Cu cation site. 2 disulfides stabilise this stretch: Cys1430–Cys1497 and Cys1585–Cys1595. One copy of the WD 3 repeat lies at 1450 to 1491 (KGKYSMSNLDYAAFDPVFFLHHATTDRIWAIWQDLQRFRKRP). Asn1648 carries N-linked (GlcNAc...) asparagine glycosylation. Positions 1681–2097 (VMIRKDITQL…HDISSHHLSL (417 aa)) are functional unit e (wall). His1721 contributes to the Cu cation binding site. An intrachain disulfide couples Cys1727 to Cys1738. Positions 1739-1741 (CVH) form a cross-link, 2'-(S-cysteinyl)-histidine (Cys-His). Cu cation-binding residues include His1741, His1750, His1863, His1867, and His1894. 2 disulfides stabilise this stretch: Cys1853-Cys1920 and Cys2009-Cys2015. One copy of the WD 4 repeat lies at 1873-1914 (KEPYGIGHLHYASYDPLFYIHHSQTDRIWAIWQSLQRFRGLS). The interval 2098–2517 (NKVRHDLSTL…EDHHSSSMAG (420 aa)) is functional unit f (wall). Cu cation is bound at residue His2138. Cysteines 2144 and 2154 form a disulfide. N-linked (GlcNAc...) asparagine glycosylation occurs at Asn2145. The 2'-(S-cysteinyl)-histidine (Cys-His) cross-link spans 2155–2157 (CIH). Residues His2157, His2166, His2276, His2280, and His2307 each contribute to the Cu cation site. Residues 2163–2199 (PHWHRLYTLQFEQALRRHGSSVAVPYWDWTKPIHNIP) form a WD 5 repeat. Disulfide bonds link Cys2266/Cys2333 and Cys2420/Cys2426. Residue Glu2424 coordinates a divalent metal cation. Residues 2518-2921 (HGVRKEINTL…EKHHEDHHED (404 aa)) are functional unit g (internal arc). His2558 provides a ligand contact to Cu cation. An intrachain disulfide couples Cys2564 to Cys2574. N-linked (GlcNAc...) asparagine glycosylation is present at Asn2571. The segment at residues 2575-2577 (CTH) is a cross-link (2'-(S-cysteinyl)-histidine (Cys-His)). Residues His2577, His2586, His2686, His2690, and His2717 each contribute to the Cu cation site. 2 disulfides stabilise this stretch: Cys2676/Cys2743 and Cys2830/Cys2836. The stretch at 2696–2737 (LTPYGMSTLEYTTYDPLFWLHHANTDRIWAIWQALQEYRGLP) is one WD 6 repeat. Residues 2922–3414 (ILVRKNIHSL…LRIHVHVDDE (493 aa)) form a functional unit h (internal slab) region. His2962 serves as a coordination point for Cu cation. A disulfide bond links Cys2968 and Cys2978. A cross-link (2'-(S-cysteinyl)-histidine (Cys-His)) is located at residues 2979–2981 (CVH). The Cu cation site is built by His2981, His2990, His3091, His3095, and His3122. A disulfide bridge connects residues Cys3081 and Cys3148. The stretch at 3101–3142 (AEKYSMSTLEYSAFDPYFMIHHASLDKIWIIWQELQKRRVKP) is one WD 7 repeat. N-linked (GlcNAc...) asparagine glycosylation is present at Asn3278. A disulfide bond links Cys3367 and Cys3400.

Belongs to the tyrosinase family. Hemocyanin subfamily. As to quaternary structure, homo-didecamer, with two decamers assembled face-to-face at their open ends. This didecamer form a stable 25 nM cylinder wall. Post-translationally, probably N-glycosylated. Asn-1280 and Asn-2484 are buried deeply in the protein which make them inaccessible for sugar attachment. Asn-3278 N-glycan is likely to represent a diantennate carbohydrate tree. The didecamer is almost evenly tagged by a total of 120 sugar trees. As to expression, hemolymph.

It is found in the secreted. The protein resides in the extracellular space. Hemocyanins are copper-containing oxygen carriers occurring freely dissolved in the hemolymph of many mollusks and arthropods. In Megathura crenulata (Giant keyhole limpet), this protein is Hemocyanin 1.